Here is a 367-residue protein sequence, read N- to C-terminus: Cell-death-related nuclease 7 (367 aa).

The N-terminal stretch at 1–18 (MRLYFVLIFSVIFTTGNG) is a signal peptide. The N-linked (GlcNAc...) asparagine glycan is linked to asparagine 253.

It belongs to the DNase II family.

The protein is Cell-death-related nuclease 7 (crn-7) of Caenorhabditis elegans.